The primary structure comprises 512 residues: Probable anion transporter 3, chloroplastic (512 aa).

The N-terminal 44 residues, 1-44, are a transit peptide targeting the chloroplast; it reads MATVGSLKPLHHSSCSSSFPRNPIVNRKALLGFVFDSARKNQIR. Helical transmembrane passes span 102-124, 139-159, 167-187, 191-211, 228-248, 250-270, 324-344, 359-379, 396-416, 422-442, 462-482, and 486-506; these read VILT…VAVV, VVQS…GALV, VLAW…WAAA, LALL…MPSM, VGIS…LTPL, LSSI…LLWV, WAII…LSWM, AAWF…YAGA, KIMQ…LNFA, AAVF…GFLL, AGTL…QWLG, and AFLT…LLFA.

Belongs to the major facilitator superfamily. Sodium/anion cotransporter (TC 2.A.1.14) family. As to expression, expressed in roots.

Its subcellular location is the plastid. The protein resides in the chloroplast membrane. Functionally, inorganic phosphate and probable anion transporter. The chain is Probable anion transporter 3, chloroplastic (ANTR3) from Arabidopsis thaliana (Mouse-ear cress).